Consider the following 37-residue polypeptide: Photosystem II reaction center protein K (37 aa).

Residues 1–15 (KLPEAYAIFDPLVDV) lie on the Lumenal side of the membrane. The chain crosses the membrane as a helical span at residues 16-30 (LPVIPVLFFALAFVV). The Cytoplasmic segment spans residues 31–37 (QAAVGFR).

Belongs to the PsbK family. In terms of assembly, PSII is composed of 1 copy each of membrane proteins PsbA, PsbB, PsbC, PsbD, PsbE, PsbF, PsbH, PsbI, PsbJ, PsbK, PsbL, PsbM, PsbT, PsbX, PsbY, PsbZ, Psb30/Ycf12, peripheral proteins PsbO, CyanoQ (PsbQ), PsbU, PsbV and a large number of cofactors. It forms dimeric complexes. PSII binds multiple chlorophylls, carotenoids and specific lipids. serves as cofactor.

It localises to the cellular thylakoid membrane. One of the components of the core complex of photosystem II (PSII). PSII is a light-driven water:plastoquinone oxidoreductase that uses light energy to abstract electrons from H(2)O, generating O(2) and a proton gradient subsequently used for ATP formation. It consists of a core antenna complex that captures photons, and an electron transfer chain that converts photonic excitation into a charge separation. This chain is Photosystem II reaction center protein K, found in Thermostichus vulcanus (Synechococcus vulcanus).